Here is a 236-residue protein sequence, read N- to C-terminus: Small ribosomal subunit protein uS2c (236 aa).

It belongs to the universal ribosomal protein uS2 family.

Its subcellular location is the plastid. It is found in the chloroplast. The polypeptide is Small ribosomal subunit protein uS2c (rps2) (Daucus carota (Wild carrot)).